The chain runs to 654 residues: Probable Xaa-Pro aminopeptidase P (654 aa).

Residues Asp451, Asp462, Glu560, and Glu574 each coordinate Mn(2+).

It belongs to the peptidase M24B family. Mn(2+) serves as cofactor.

The enzyme catalyses Release of any N-terminal amino acid, including proline, that is linked to proline, even from a dipeptide or tripeptide.. Catalyzes the removal of a penultimate prolyl residue from the N-termini of peptides. The polypeptide is Probable Xaa-Pro aminopeptidase P (ampp) (Botryotinia fuckeliana (strain B05.10) (Noble rot fungus)).